The chain runs to 188 residues: Adenylate kinase (188 aa).

11-16 serves as a coordination point for ATP; the sequence is GAGKGT. An NMP region spans residues 31–60; it reads STGDIFRANIKDQTELGREAQRYTDAGNLV. AMP contacts are provided by residues Thr-32, Arg-37, 58 to 60, 86 to 89, and Gln-93; these read NLV and GYPR. The interval 127 to 137 is LID; the sequence is GRAQEQGRTDD. Residue Arg-128 coordinates ATP. Residues Arg-134 and Arg-145 each coordinate AMP. Gly-173 is an ATP binding site.

The protein belongs to the adenylate kinase family. Monomer.

Its subcellular location is the cytoplasm. It catalyses the reaction AMP + ATP = 2 ADP. Its pathway is purine metabolism; AMP biosynthesis via salvage pathway; AMP from ADP: step 1/1. Its function is as follows. Catalyzes the reversible transfer of the terminal phosphate group between ATP and AMP. Plays an important role in cellular energy homeostasis and in adenine nucleotide metabolism. In Kocuria rhizophila (strain ATCC 9341 / DSM 348 / NBRC 103217 / DC2201), this protein is Adenylate kinase.